The sequence spans 76 residues: MAIFDDIKEVVVEQLNVNPEEVKEESKFVEDLGADSLDVVELVMALEEKFNIEIPDEEAEKIATVGDVVRYIETNK.

The region spanning 1–76 is the Carrier domain; it reads MAIFDDIKEV…DVVRYIETNK (76 aa). S36 carries the O-(pantetheine 4'-phosphoryl)serine modification.

This sequence belongs to the acyl carrier protein (ACP) family. In terms of processing, 4'-phosphopantetheine is transferred from CoA to a specific serine of apo-ACP by AcpS. This modification is essential for activity because fatty acids are bound in thioester linkage to the sulfhydryl of the prosthetic group.

It is found in the cytoplasm. It participates in lipid metabolism; fatty acid biosynthesis. Carrier of the growing fatty acid chain in fatty acid biosynthesis. This is Acyl carrier protein from Wolinella succinogenes (strain ATCC 29543 / DSM 1740 / CCUG 13145 / JCM 31913 / LMG 7466 / NCTC 11488 / FDC 602W) (Vibrio succinogenes).